A 461-amino-acid polypeptide reads, in one-letter code: MLKIFNTLTRQKEEFKPIHAGEVGMYVCGITVYDLCHIGHGRTFVSFDVVSRYLRFLGYTLKYVRNITDIDDKIIKRANENGESFVALVDRMIAEMHKDFDALNILRPDSEPRATHHIHEIIEITEKLIERGHAYVASNGDVMFSVPTDPGYGQLSRQDLEQLQAGARVDVVDVKRNPMDFVLWKTSKEGEPSWPSPWGEGRPGWHIECSAMNCKQLGNHFDIHGGGSDLMFPHHENEIAQSTCAHGGEYVNYWMHSGMVMVDREKMSKSLDNFFTVRDVLKYYDAETVRYFLMSGHYRSQLNYSEENLKQARSALERLYIAVRGTDKSVAPAGGEAFEARFIDVMNDDFNTPEAYSVLFDMAREINRLKVEDVSAANALASHLRKLAAVLGLLEQDPETFLQSGAQNDGDEVAKIEALITARLEARQAKDWAAADAARNRLTEMGIVLEDGPQGTIWRRK.

C28 is a Zn(2+) binding site. A 'HIGH' region motif is present at residues 30–40; the sequence is ITVYDLCHIGH. Zn(2+) contacts are provided by C209, H234, and E238. A 'KMSKS' region motif is present at residues 266 to 270; that stretch reads KMSKS. K269 serves as a coordination point for ATP.

The protein belongs to the class-I aminoacyl-tRNA synthetase family. In terms of assembly, monomer. Zn(2+) is required as a cofactor.

It is found in the cytoplasm. The catalysed reaction is tRNA(Cys) + L-cysteine + ATP = L-cysteinyl-tRNA(Cys) + AMP + diphosphate. The protein is Cysteine--tRNA ligase of Enterobacter sp. (strain 638).